Here is a 902-residue protein sequence, read N- to C-terminus: Tiger protein B1 (902 aa).

Positions 1–24 (MKVIYIYLLLLLVCKFLFVKSSCS) are cleaved as a signal peptide. Over 25 to 803 (LKVGKIECTK…IIYSENKSTG (779 aa)) the chain is Extracellular. N-linked (GlcNAc...) asparagine glycans are attached at residues Asn-43, Asn-144, Asn-184, Asn-223, Asn-272, Asn-279, Asn-288, Asn-358, Asn-389, Asn-398, Asn-437, Asn-559, Asn-628, Asn-644, Asn-706, Asn-753, Asn-764, Asn-771, and Asn-799. The region spanning 249–323 (MEGVLNDNGG…ITIDGEYKSN (75 aa)) is the IPT/TIG 1 domain. IPT/TIG domains follow at residues 603-680 (PIIE…ISSS) and 704-788 (ITNT…IFQF). Residues 804–824 (FPNEMYLGFVVFVIFIALISF) traverse the membrane as a helical segment. The Cytoplasmic segment spans residues 825 to 902 (AAKNQIEKYF…IRRCFKEHTD (78 aa)).

It localises to the cell membrane. In terms of biological role, tgrB1 and tgrC1 are involved in kin discrimination. They play an essential role in aggregation and subsequent development. This Dictyostelium discoideum (Social amoeba) protein is Tiger protein B1 (tgrB1).